An 84-amino-acid chain; its full sequence is Large ribosomal subunit protein bL27 (84 aa).

The segment at 1-22 (MAHKKAGGSTRNGRDSESKRLG) is disordered.

The protein belongs to the bacterial ribosomal protein bL27 family.

This is Large ribosomal subunit protein bL27 from Shewanella loihica (strain ATCC BAA-1088 / PV-4).